A 705-amino-acid polypeptide reads, in one-letter code: Polyphosphate kinase (705 aa).

N58 contacts ATP. The Mg(2+) site is built by R389 and R419. H449 acts as the Phosphohistidine intermediate in catalysis. Y482, R578, and H606 together coordinate ATP.

The protein belongs to the polyphosphate kinase 1 (PPK1) family. Requires Mg(2+) as cofactor. Post-translationally, an intermediate of this reaction is the autophosphorylated ppk in which a phosphate is covalently linked to a histidine residue through a N-P bond.

It carries out the reaction [phosphate](n) + ATP = [phosphate](n+1) + ADP. Catalyzes the reversible transfer of the terminal phosphate of ATP to form a long-chain polyphosphate (polyP). In Halalkalibacterium halodurans (strain ATCC BAA-125 / DSM 18197 / FERM 7344 / JCM 9153 / C-125) (Bacillus halodurans), this protein is Polyphosphate kinase.